We begin with the raw amino-acid sequence, 238 residues long: RNA-binding protein pno1 (238 aa).

The 50-residue stretch at 162 to 211 (QSRAIGRLAGKGGRTKFTIENVTKTRIVLADSKIHILGSYQNIQLARRAI) folds into the KH domain.

It belongs to the PNO1 family.

It is found in the nucleus. The protein localises to the nucleolus. This is RNA-binding protein pno1 (l(1)G0004) from Drosophila pseudoobscura pseudoobscura (Fruit fly).